We begin with the raw amino-acid sequence, 648 residues long: Fidgetin-like protein 2 (648 aa).

Positions 1-36 (MHWTPEHAQPLNQWPEQHLDVSSTTPSPAHKLELPP) are disordered. Over residues 10–27 (PLNQWPEQHLDVSSTTPS) the composition is skewed to polar residues. ATP is bound by residues Ala-394 and 434 to 439 (GCGKAL).

The protein belongs to the AAA ATPase family. The cofactor is Mg(2+).

Its subcellular location is the cytoplasm. The protein resides in the cell cortex. The enzyme catalyses ATP + H2O = ADP + phosphate + H(+). In terms of biological role, microtubule-severing enzyme that negatively regulates cell migration and wound healing. In migrating cells, targets dynamic microtubules (MTs) at the leading edge and severs them, thereby suppressing motility. Microtubule severing releases ARHGEF2 which activates RHOA, which in turn regulates focal ahesion turnover via focal adhesion kinase, as opposed to F-actin polymerization, to suppress cell motility. Negative regulator of axon regeneration that suppresses axonal growth by selectively severing dynamic MTs in the distal axon shaft and growth cone. Contributes to proper cell branching during endothelial and neuronal development. This Rattus norvegicus (Rat) protein is Fidgetin-like protein 2 (Fignl2).